Reading from the N-terminus, the 600-residue chain is MSRQGISLRFPLLLLLLSPSPVLPADPGAPAPVNPCCYYPCQHQGICVRFGLDRYQCDCTRTGYYGPNCTIPEIWTWLRTTLRPSPSFVHFLLTHGRWLWDFVNATFIRDKLMRLVLTVRSNLIPSPPTYNVAHDYISWESFSNVSYYTRILPSVPRDCPTPMGTKGKKQLPDAEFLSRRFLLRRKFIPDPQGTNLMFAFFAQHFTHQFFKTSGKMGPGFTKALGHGVDLGHIYGDNLERQYQLRLFKDGKLKYQMLNGEVYPPSVEEAPVLMHYPRGIPPQSQMAVGQEVFGLLPGLMVYATIWLREHNRVCDLLKAEHPTWGDEQLFQTARLILIGETIKIVIEEYVQQLSGYFLQLKFDPELLFGAQFQYRNRIAMEFNQLYHWHPLMPDSFRVGPQDYSYEQFLFNTSMLVDYGVEALVDAFSRQPAGRIGGGRNIDHHILHVAVDVIKESRELRLQPFNEYRKRFGMKPYTSFQELTGEKEMAAELEELYGDIDALEFYPGLLLEKCHPNSIFGESMIEMGAPFSLKGLLGNPICSPEYWKASTFGGDVGFNLVKTATLKKLVCLNTKTCPYVSFHVPDPHREDRPGVERPPTEL.

The signal sequence occupies residues 1–24; it reads MSRQGISLRFPLLLLLLSPSPVLP. Positions 32-70 constitute an EGF-like domain; that stretch reads PVNPCCYYPCQHQGICVRFGLDRYQCDCTRTGYYGPNCT. Disulfide bonds link Cys-36–Cys-47, Cys-37–Cys-159, Cys-41–Cys-57, and Cys-59–Cys-69. N-linked (GlcNAc...) asparagine glycans are attached at residues Asn-68, Asn-104, and Asn-144. Catalysis depends on His-207, which acts as the Proton acceptor. The active-site For cyclooxygenase activity is Tyr-385. Heme b is bound at residue His-388. An N-linked (GlcNAc...) asparagine glycan is attached at Asn-410. Cysteines 569 and 575 form a disulfide.

The protein belongs to the prostaglandin G/H synthase family. In terms of assembly, homodimer. The cofactor is heme b.

The protein resides in the microsome membrane. It is found in the endoplasmic reticulum membrane. It carries out the reaction (5Z,8Z,11Z,14Z)-eicosatetraenoate + AH2 + 2 O2 = prostaglandin H2 + A + H2O. It catalyses the reaction (5Z,8Z,11Z,14Z)-eicosatetraenoate + 2 O2 = prostaglandin G2. The enzyme catalyses prostaglandin G2 + AH2 = prostaglandin H2 + A + H2O. The catalysed reaction is (9Z,12Z)-octadecadienoate + AH2 + O2 = (9R)-hydroxy-(10E,12Z)-octadecadienoate + A + H2O. It carries out the reaction (9Z,12Z)-octadecadienoate + AH2 + O2 = (9S)-hydroxy-(10E,12Z)-octadecadienoate + A + H2O. It catalyses the reaction (9Z,12Z)-octadecadienoate + AH2 + O2 = (13S)-hydroxy-(9Z,11E)-octadecadienoate + A + H2O. The enzyme catalyses (9Z,12Z)-octadecadienoate + AH2 + O2 = (13R)-hydroxy-(9Z,11E)-octadecadienoate + A + H2O. It participates in lipid metabolism; prostaglandin biosynthesis. The cyclooxygenase activity is inhibited by nonsteroidal anti-inflammatory drugs (NSAIDs) including ibuprofen, flurbiprofen, ketoprofen, naproxen, flurbiprofen, anirolac, fenclofenac and diclofenac. Its function is as follows. Dual cyclooxygenase and peroxidase that plays an important role in the biosynthesis pathway of prostanoids, a class of C20 oxylipins mainly derived from arachidonate ((5Z,8Z,11Z,14Z)-eicosatetraenoate, AA, C20:4(n-6)), with a particular role in the inflammatory response. The cyclooxygenase activity oxygenates AA to the hydroperoxy endoperoxide prostaglandin G2 (PGG2), and the peroxidase activity reduces PGG2 to the hydroxy endoperoxide prostaglandin H2 (PGH2), the precursor of all 2-series prostaglandins and thromboxanes. This complex transformation is initiated by abstraction of hydrogen at carbon 13 (with S-stereochemistry), followed by insertion of molecular O2 to form the endoperoxide bridge between carbon 9 and 11 that defines prostaglandins. The insertion of a second molecule of O2 (bis-oxygenase activity) yields a hydroperoxy group in PGG2 that is then reduced to PGH2 by two electrons. Involved in the constitutive production of prostanoids in particular in the stomach and platelets. In gastric epithelial cells, it is a key step in the generation of prostaglandins, such as prostaglandin E2 (PGE2), which plays an important role in cytoprotection. In platelets, it is involved in the generation of thromboxane A2 (TXA2), which promotes platelet activation and aggregation, vasoconstriction and proliferation of vascular smooth muscle cells. Can also use linoleate (LA, (9Z,12Z)-octadecadienoate, C18:2(n-6)) as substrate and produce hydroxyoctadecadienoates (HODEs) in a regio- and stereospecific manner, being (9R)-HODE ((9R)-hydroxy-(10E,12Z)-octadecadienoate) and (13S)-HODE ((13S)-hydroxy-(9Z,11E)-octadecadienoate) its major products. This is Prostaglandin G/H synthase 1 (PTGS1) from Bos taurus (Bovine).